A 257-amino-acid polypeptide reads, in one-letter code: MTRFRPCIDLHAGQVKQIVGGTLDSATSELRTNFVSPHPPAYFAKLYRDNDLSGAHVIMLGPGNKEAALESLKAWPGGLQVGGGITDANAREWVEAGAEKVIITSYLFPNGKFSQSHLDAVLAALDGDKSKLVIDLSCRRQGDDRWFVAMNKWQTITDMEVSEESIKALEPYCSEFLIHAADNEGLQKGIDEKLVQRLSEWCSIPVTYAGGGRNLEDLETVKRLSGGKVDLTIGSALDCFGGKGVTLQECVEWNRRQ.

It belongs to the HisA/HisF family.

It localises to the cytoplasm. It carries out the reaction 1-(5-phospho-beta-D-ribosyl)-5-[(5-phospho-beta-D-ribosylamino)methylideneamino]imidazole-4-carboxamide = 5-[(5-phospho-1-deoxy-D-ribulos-1-ylimino)methylamino]-1-(5-phospho-beta-D-ribosyl)imidazole-4-carboxamide. The protein operates within amino-acid biosynthesis; L-histidine biosynthesis; L-histidine from 5-phospho-alpha-D-ribose 1-diphosphate: step 4/9. The protein is 1-(5-phosphoribosyl)-5-[(5-phosphoribosylamino)methylideneamino] imidazole-4-carboxamide isomerase (his-7) of Neurospora crassa (strain ATCC 24698 / 74-OR23-1A / CBS 708.71 / DSM 1257 / FGSC 987).